We begin with the raw amino-acid sequence, 620 residues long: Glutathione-regulated potassium-efflux system protein KefC (620 aa).

Residues 1 to 3 (MDS) lie on the Periplasmic side of the membrane. Residues 4–24 (HTLLQALIYLGSAALIVPIAV) traverse the membrane as a helical segment. R25 is a topological domain (cytoplasmic). The chain crosses the membrane as a helical span at residues 26-46 (LGLGSVLGYLIAGCIIGPWGL). Topologically, residues 47–53 (RLVTDAE) are periplasmic. The helical transmembrane segment at 54-74 (SILHFAEIGVVLMLFVIGLEL) threads the bilayer. Residues 75–89 (DPQRLWKLRASVFGG) lie on the Cytoplasmic side of the membrane. A helical membrane pass occupies residues 90–110 (GALQMVVCGGLIGLFCMFLGL). Topologically, residues 111–113 (RWQ) are periplasmic. The chain crosses the membrane as a helical span at residues 114 to 134 (VAELIGMTLALSSTAIAMQAM). Topologically, residues 135–148 (NERNLTVSQVGRSA) are cytoplasmic. The chain crosses the membrane as a helical span at residues 149 to 169 (FAVLLFQDIAAIPLVAMIPLL). Residues 170-177 (AASGASTT) lie on the Periplasmic side of the membrane. Residues 178 to 198 (LGAFALSALKVAGALALVVLL) traverse the membrane as a helical segment. Topologically, residues 199–213 (GRYVTRPALRFVARS) are cytoplasmic. Residues 214-233 (GLREVFSAVALFLVFGFGLL) form a helical membrane-spanning segment. The Periplasmic segment spans residues 234–236 (LEE). Residues 237–254 (VGLSMAMGAFLAGVLLAS) traverse the membrane as a helical segment. Residues 255 to 269 (SEYRHALESDIEPFK) are Cytoplasmic-facing. The helical transmembrane segment at 270 to 290 (GLLLGLFFIGVGMSIDFGTLV) threads the bilayer. Topologically, residues 291 to 293 (ENP) are periplasmic. Residues 294–314 (LRILLLLAGFLAIKIVMLWLV) form a helical membrane-spanning segment. The Cytoplasmic portion of the chain corresponds to 315-326 (ARTLGVPAKQRR). Residues 327–347 (WFAVLLGQGSEFAFVVFGAAQ) traverse the membrane as a helical segment. Residues 348–358 (MADVLEPEWAK) lie on the Periplasmic side of the membrane. A helical transmembrane segment spans residues 359 to 379 (ALTLAVALSMAATPIFLVLLT). Over 380–620 (RMEKTATGEA…ADEPEVKPSI (241 aa)) the chain is Cytoplasmic. In terms of domain architecture, RCK N-terminal spans 399–518 (QPRVIVAGFG…AGVAMPERET (120 aa)). The disordered stretch occupies residues 599 to 620 (QGTAEGKHSGKAADEPEVKPSI). Over residues 603–620 (EGKHSGKAADEPEVKPSI) the composition is skewed to basic and acidic residues.

This sequence belongs to the monovalent cation:proton antiporter 2 (CPA2) transporter (TC 2.A.37) family. KefC subfamily. Homodimer. Interacts with the regulatory subunit KefF.

The protein resides in the cell inner membrane. Its function is as follows. Pore-forming subunit of a potassium efflux system that confers protection against electrophiles. Catalyzes K(+)/H(+) antiport. In Salmonella typhi, this protein is Glutathione-regulated potassium-efflux system protein KefC.